A 1203-amino-acid polypeptide reads, in one-letter code: DNA-directed RNA polymerase subunit beta' (1203 aa).

Zn(2+) is bound by residues Cys-60, Cys-62, Cys-75, and Cys-78. Positions 449, 451, and 453 each coordinate Mg(2+). Positions 818, 892, 899, and 902 each coordinate Zn(2+).

This sequence belongs to the RNA polymerase beta' chain family. As to quaternary structure, the RNAP catalytic core consists of 2 alpha, 1 beta, 1 beta' and 1 omega subunit. When a sigma factor is associated with the core the holoenzyme is formed, which can initiate transcription. Mg(2+) is required as a cofactor. Zn(2+) serves as cofactor.

It carries out the reaction RNA(n) + a ribonucleoside 5'-triphosphate = RNA(n+1) + diphosphate. Functionally, DNA-dependent RNA polymerase catalyzes the transcription of DNA into RNA using the four ribonucleoside triphosphates as substrates. The chain is DNA-directed RNA polymerase subunit beta' from Bacillus mycoides (strain KBAB4) (Bacillus weihenstephanensis).